Consider the following 1187-residue polypeptide: DNA-directed RNA polymerase subunit beta (1187 aa).

The segment at 1150–1187 is disordered; sequence KDEDDDPASSADDLGFNIGARPDAAAKEDQKAEEPEYQ. The span at 1173-1187 shows a compositional bias: basic and acidic residues; sequence AAAKEDQKAEEPEYQ.

Belongs to the RNA polymerase beta chain family. In terms of assembly, the RNAP catalytic core consists of 2 alpha, 1 beta, 1 beta' and 1 omega subunit. When a sigma factor is associated with the core the holoenzyme is formed, which can initiate transcription.

The enzyme catalyses RNA(n) + a ribonucleoside 5'-triphosphate = RNA(n+1) + diphosphate. Its function is as follows. DNA-dependent RNA polymerase catalyzes the transcription of DNA into RNA using the four ribonucleoside triphosphates as substrates. The polypeptide is DNA-directed RNA polymerase subunit beta (Bifidobacterium longum subsp. infantis (strain ATCC 15697 / DSM 20088 / JCM 1222 / NCTC 11817 / S12)).